We begin with the raw amino-acid sequence, 513 residues long: ATP synthase subunit alpha (513 aa).

Glycine 169–serine 176 serves as a coordination point for ATP.

The protein belongs to the ATPase alpha/beta chains family. F-type ATPases have 2 components, CF(1) - the catalytic core - and CF(0) - the membrane proton channel. CF(1) has five subunits: alpha(3), beta(3), gamma(1), delta(1), epsilon(1). CF(0) has three main subunits: a(1), b(2) and c(9-12). The alpha and beta chains form an alternating ring which encloses part of the gamma chain. CF(1) is attached to CF(0) by a central stalk formed by the gamma and epsilon chains, while a peripheral stalk is formed by the delta and b chains.

It localises to the cell membrane. The enzyme catalyses ATP + H2O + 4 H(+)(in) = ADP + phosphate + 5 H(+)(out). Its function is as follows. Produces ATP from ADP in the presence of a proton gradient across the membrane. The alpha chain is a regulatory subunit. The sequence is that of ATP synthase subunit alpha from Levilactobacillus brevis (strain ATCC 367 / BCRC 12310 / CIP 105137 / JCM 1170 / LMG 11437 / NCIMB 947 / NCTC 947) (Lactobacillus brevis).